Consider the following 147-residue polypeptide: Putative fibroblast growth factor 1 (147 aa).

N25 contributes to the heparin binding site. The interval 117–133 (KKNGKMKRGPRTHIGQK) is heparin-binding.

Belongs to the heparin-binding growth factors family.

Its subcellular location is the secreted. The protein resides in the cytoplasm. It is found in the cell cortex. It localises to the cytosol. The protein localises to the nucleus. Its function is as follows. Plays an important role in the regulation of cell survival, cell division, angiogenesis, cell differentiation and cell migration. Functions as a potent mitogen in vitro. Acts as a ligand for FGFR1 and integrins. Binds to FGFR1 in the presence of heparin leading to FGFR1 dimerization and activation via sequential autophosphorylation on tyrosine residues which act as docking sites for interacting proteins, leading to the activation of several signaling cascades. Binds to integrins. Its binding to integrins and subsequent ternary complex formation with integrins and FGFR1 are essential for FGF1 signaling. The protein is Putative fibroblast growth factor 1 (fgf1) of Danio rerio (Zebrafish).